The primary structure comprises 87 residues: MSITASEARQNLFPLIEQVNEDHAPVHITSRKGNAVLMSEEDFTAWTETVHLLRSPRNARRLLDSIAEAEAGDATEHDLIDPDAERA.

Belongs to the phD/YefM antitoxin family. Forms a complex with YoeB which inhibits its toxin activity.

Functionally, antitoxin component of a type II toxin-antitoxin (TA) system. A probable antitoxin for the putative mRNA interferase YeoB. The sequence is that of Antitoxin YefM from Streptomyces coelicolor (strain ATCC BAA-471 / A3(2) / M145).